We begin with the raw amino-acid sequence, 165 residues long: 3-isopropylmalate dehydratase small subunit (165 aa).

Belongs to the LeuD family. LeuD type 2 subfamily. In terms of assembly, heterodimer of LeuC and LeuD.

The enzyme catalyses (2R,3S)-3-isopropylmalate = (2S)-2-isopropylmalate. It functions in the pathway amino-acid biosynthesis; L-leucine biosynthesis; L-leucine from 3-methyl-2-oxobutanoate: step 2/4. Functionally, catalyzes the isomerization between 2-isopropylmalate and 3-isopropylmalate, via the formation of 2-isopropylmaleate. In Saccharolobus islandicus (strain M.14.25 / Kamchatka #1) (Sulfolobus islandicus), this protein is 3-isopropylmalate dehydratase small subunit.